Reading from the N-terminus, the 656-residue chain is Putative cysteine-rich receptor-like protein kinase 32 (656 aa).

The first 23 residues, 1 to 23 (MCLQNLLSILCFVLAISFGYVSA), serve as a signal peptide directing secretion. Gnk2-homologous domains follow at residues 24–126 (QKCV…NSSF) and 134–238 (PTMV…GSEY). The Extracellular portion of the chain corresponds to 24 to 262 (QKCVDSMFFR…PDGKTISTGA (239 aa)). N-linked (GlcNAc...) asparagine glycosylation is found at N35, N52, N61, N103, and N123. The chain crosses the membrane as a helical span at residues 263-283 (IVAVVVSVVIFVVLLALVLVI). Residues 284–656 (RKRRQSYKTL…SASITRVTPR (373 aa)) are Cytoplasmic-facing. In terms of domain architecture, Protein kinase spans 321-606 (FSRNNKLGKG…IFQMLTNSSI (286 aa)). ATP-binding positions include 327 to 335 (LGKGGFGEV) and K349. The residue at position 394 (Y394) is a Phosphotyrosine. D454 functions as the Proton acceptor in the catalytic mechanism. At S458 the chain carries Phosphoserine. T494 is subject to Phosphothreonine. Y502 is subject to Phosphotyrosine.

It belongs to the protein kinase superfamily. Ser/Thr protein kinase family. CRK subfamily.

The protein resides in the membrane. The enzyme catalyses L-seryl-[protein] + ATP = O-phospho-L-seryl-[protein] + ADP + H(+). The catalysed reaction is L-threonyl-[protein] + ATP = O-phospho-L-threonyl-[protein] + ADP + H(+). This is Putative cysteine-rich receptor-like protein kinase 32 (CRK32) from Arabidopsis thaliana (Mouse-ear cress).